Reading from the N-terminus, the 531-residue chain is Probable bifunctional methylthioribulose-1-phosphate dehydratase/enolase-phosphatase E1 2 (531 aa).

A methylthioribulose-1-phosphate dehydratase region spans residues methionine 1–aspartate 248. Residue cysteine 120 participates in substrate binding. Zn(2+) is bound by residues histidine 138 and histidine 140. Glutamate 163 serves as the catalytic Proton donor/acceptor; for methylthioribulose-1-phosphate dehydratase activity. Residue histidine 213 participates in Zn(2+) binding. An enolase-phosphatase E1 region spans residues isoleucine 292–isoleucine 531. Residues aspartate 295 and glutamate 297 each coordinate Mg(2+). Residues serine 430 to serine 431 and lysine 464 each bind substrate. Aspartate 490 lines the Mg(2+) pocket.

In the N-terminal section; belongs to the aldolase class II family. MtnB subfamily. This sequence in the C-terminal section; belongs to the HAD-like hydrolase superfamily. MasA/MtnC family. Zn(2+) serves as cofactor. Mg(2+) is required as a cofactor.

The enzyme catalyses 5-(methylsulfanyl)-D-ribulose 1-phosphate = 5-methylsulfanyl-2,3-dioxopentyl phosphate + H2O. It carries out the reaction 5-methylsulfanyl-2,3-dioxopentyl phosphate + H2O = 1,2-dihydroxy-5-(methylsulfanyl)pent-1-en-3-one + phosphate. It functions in the pathway amino-acid biosynthesis; L-methionine biosynthesis via salvage pathway; L-methionine from S-methyl-5-thio-alpha-D-ribose 1-phosphate: step 2/6. It participates in amino-acid biosynthesis; L-methionine biosynthesis via salvage pathway; L-methionine from S-methyl-5-thio-alpha-D-ribose 1-phosphate: step 3/6. Its pathway is amino-acid biosynthesis; L-methionine biosynthesis via salvage pathway; L-methionine from S-methyl-5-thio-alpha-D-ribose 1-phosphate: step 4/6. In Vitis vinifera (Grape), this protein is Probable bifunctional methylthioribulose-1-phosphate dehydratase/enolase-phosphatase E1 2.